A 278-amino-acid chain; its full sequence is Probable septum site-determining protein MinC (278 aa).

The protein belongs to the MinC family. In terms of assembly, interacts with MinD and FtsZ.

Cell division inhibitor that blocks the formation of polar Z ring septums. Rapidly oscillates between the poles of the cell to destabilize FtsZ filaments that have formed before they mature into polar Z rings. Prevents FtsZ polymerization. The polypeptide is Probable septum site-determining protein MinC (Gloeobacter violaceus (strain ATCC 29082 / PCC 7421)).